The sequence spans 116 residues: Flagellar transcriptional regulator FlhD (116 aa).

This sequence belongs to the FlhD family. In terms of assembly, homodimer; disulfide-linked. Forms a heterohexamer composed of two FlhC and four FlhD subunits. Each FlhC binds a FlhD dimer, forming a heterotrimer, and a hexamer assembles by dimerization of two heterotrimers.

Its subcellular location is the cytoplasm. Functionally, functions in complex with FlhC as a master transcriptional regulator that regulates transcription of several flagellar and non-flagellar operons by binding to their promoter region. Activates expression of class 2 flagellar genes, including fliA, which is a flagellum-specific sigma factor that turns on the class 3 genes. Also regulates genes whose products function in a variety of physiological pathways. In Escherichia coli O9:H4 (strain HS), this protein is Flagellar transcriptional regulator FlhD.